Reading from the N-terminus, the 337-residue chain is MQVYYDKDADLSLIKGKTVAIIGYGSQGHAHAANLKDSGVNVVIGLRQGSSWKKAEAAGHVVKTVAEATKEADVVMLLLPDETMPAVYHAEVTANLKEGATLAFAHGFNVHYNQIVPRADLDVIMVAPKGPGHTVRSEYKRGGGVPSLIAVYQDNSGKAKDIALSYAAANGGTKGGVIETTFREETETDLFGEQAVLCGGVVELIKAGFETLTEAGYAPEMAYFECLHEMKLIVDLIFEGGIANMNYSISNNAEYGEYVTGPEVVNASSKEAMRNALKRIQTGEYAKMFIQEGNVNYASMTARRRLNADHQVEKVGAQLRAMMPWITANKLVDQDKN.

In terms of domain architecture, KARI N-terminal Rossmann spans 1 to 180 (MQVYYDKDAD…GGTKGGVIET (180 aa)). Residues 24 to 27 (YGSQ), arginine 47, and serine 51 contribute to the NADP(+) site. The active site involves histidine 106. An NADP(+)-binding site is contributed by glycine 132. Positions 181-326 (TFREETETDL…AQLRAMMPWI (146 aa)) constitute a KARI C-terminal knotted domain. Mg(2+) contacts are provided by aspartate 189, glutamate 193, glutamate 225, and glutamate 229. Serine 250 is a substrate binding site.

It belongs to the ketol-acid reductoisomerase family. Mg(2+) serves as cofactor.

The enzyme catalyses (2R)-2,3-dihydroxy-3-methylbutanoate + NADP(+) = (2S)-2-acetolactate + NADPH + H(+). It catalyses the reaction (2R,3R)-2,3-dihydroxy-3-methylpentanoate + NADP(+) = (S)-2-ethyl-2-hydroxy-3-oxobutanoate + NADPH + H(+). It participates in amino-acid biosynthesis; L-isoleucine biosynthesis; L-isoleucine from 2-oxobutanoate: step 2/4. It functions in the pathway amino-acid biosynthesis; L-valine biosynthesis; L-valine from pyruvate: step 2/4. Functionally, involved in the biosynthesis of branched-chain amino acids (BCAA). Catalyzes an alkyl-migration followed by a ketol-acid reduction of (S)-2-acetolactate (S2AL) to yield (R)-2,3-dihydroxy-isovalerate. In the isomerase reaction, S2AL is rearranged via a Mg-dependent methyl migration to produce 3-hydroxy-3-methyl-2-ketobutyrate (HMKB). In the reductase reaction, this 2-ketoacid undergoes a metal-dependent reduction by NADPH to yield (R)-2,3-dihydroxy-isovalerate. The protein is Ketol-acid reductoisomerase (NADP(+)) of Neisseria meningitidis serogroup C (strain 053442).